Consider the following 596-residue polypeptide: Nuclear receptor subfamily 2 group C member 2 (596 aa).

At Ser-19 the chain carries Phosphoserine; by MAPK. Ser-46 is subject to Phosphoserine. 2 positions are modified to phosphoserine; by MAPK: Ser-55 and Ser-68. A Phosphoserine modification is found at Ser-98. The segment at residues 114 to 189 is a DNA-binding region (nuclear receptor); it reads VEYCVVCGDK…MGMKMESVQS (76 aa). NR C4-type zinc fingers lie at residues 117-137 and 153-177; these read CVVC…CEGC and CRSS…LKKC. Lys-192 participates in a covalent cross-link: Glycyl lysine isopeptide (Lys-Gly) (interchain with G-Cter in SUMO2). Position 219 is a phosphoserine (Ser-219). Lys-231 carries the N6-acetyllysine modification. Residues 341–583 enclose the NR LBD domain; that stretch reads GSIHVISRDQ…SIIPYILKME (243 aa).

Belongs to the nuclear hormone receptor family. NR2 subfamily. In terms of assembly, homodimer; can bind DNA as homodimer. Heterodimer; binds DNA as a heterodimer with NR2C1 required for chromatin remodeling and for binding to promoter regions such as globin DR1 repeats. Interacts with NR2C2AP; the interaction represses selective NR2C2-mediated transcriptional activity. Interacts with PCAF; the interaction preferentially occurs on the non-phosphorylated form and induces NR2C2-mediated transactivation activity and does not require the ligand-binding domain. Interacts (MAPK-mediated phosphorylated form) with NRIP1; the interaction promotes repression of NR2C2-mediated activity. Interacts with NLRP10. Interacts (via ligand-binding region) with transcriptional corepressor JAZF1; the interaction promotes NR2C2-mediated transcriptional repression. Post-translationally, phosphorylation on Ser-19 and Ser-68 is an important regulator of NR2C2-mediated transcriptional activity. Phosphorylation on these residues recruits the corepressor, NRIP1, leading to transcripional repression, whereas the non-phosphorylated form preferentially recruits the coactivator, PCAF. Expressed, during embryogenesis, in perichondrium, developing glomeruli structures and tubules of kidney, as well as in intestiinal villi. Also expressed in lung and hair follicles.

The protein resides in the nucleus. Its function is as follows. Orphan nuclear receptor that can act as a repressor or activator of transcription. An important repressor of nuclear receptor signaling pathways such as retinoic acid receptor, retinoid X, vitamin D3 receptor, thyroid hormone receptor and estrogen receptor pathways. May regulate gene expression during the late phase of spermatogenesis. Activates transcriptional activity of LHCG and is antagonist of PPARA-mediated transactivation. Together with NR2C1, forms the core of the DRED (direct repeat erythroid-definitive) complex that represses embryonic and fetal globin transcription including that of GATA1. Binds to hormone response elements (HREs) consisting of two 5'-AGGTCA-3' half site direct repeat consensus sequences. Plays a fundamental role in early embryonic development and embryonic stem cells. Required for normal spermatogenesis and cerebellum development. Appears to be important for neurodevelopmentally regulated behavior. In Mus musculus (Mouse), this protein is Nuclear receptor subfamily 2 group C member 2 (Nr2c2).